A 203-amino-acid chain; its full sequence is dITP/XTP pyrophosphatase (203 aa).

8 to 13 lines the substrate pocket; the sequence is TANKGK. Mg(2+) is bound by residues Glu41 and Asp70. Asp70 functions as the Proton acceptor in the catalytic mechanism. Substrate is bound by residues Ser71, 153 to 156, Lys176, and 181 to 182; these read FGYD and HR.

Belongs to the HAM1 NTPase family. In terms of assembly, homodimer. Requires Mg(2+) as cofactor.

It carries out the reaction XTP + H2O = XMP + diphosphate + H(+). The enzyme catalyses dITP + H2O = dIMP + diphosphate + H(+). It catalyses the reaction ITP + H2O = IMP + diphosphate + H(+). Its function is as follows. Pyrophosphatase that catalyzes the hydrolysis of nucleoside triphosphates to their monophosphate derivatives, with a high preference for the non-canonical purine nucleotides XTP (xanthosine triphosphate), dITP (deoxyinosine triphosphate) and ITP. Seems to function as a house-cleaning enzyme that removes non-canonical purine nucleotides from the nucleotide pool, thus preventing their incorporation into DNA/RNA and avoiding chromosomal lesions. The chain is dITP/XTP pyrophosphatase from Listeria monocytogenes serovar 1/2a (strain ATCC BAA-679 / EGD-e).